Consider the following 147-residue polypeptide: Nucleoside diphosphate kinase (147 aa).

Positions 11, 59, 87, 93, 104, and 114 each coordinate ATP. Residue histidine 117 is the Pros-phosphohistidine intermediate of the active site.

This sequence belongs to the NDK family. Requires Mg(2+) as cofactor.

The protein resides in the cytoplasm. It carries out the reaction a 2'-deoxyribonucleoside 5'-diphosphate + ATP = a 2'-deoxyribonucleoside 5'-triphosphate + ADP. The catalysed reaction is a ribonucleoside 5'-diphosphate + ATP = a ribonucleoside 5'-triphosphate + ADP. Its function is as follows. Major role in the synthesis of nucleoside triphosphates other than ATP. The ATP gamma phosphate is transferred to the NDP beta phosphate via a ping-pong mechanism, using a phosphorylated active-site intermediate. This is Nucleoside diphosphate kinase from Sulfurisphaera tokodaii (strain DSM 16993 / JCM 10545 / NBRC 100140 / 7) (Sulfolobus tokodaii).